The chain runs to 578 residues: MKDTIRQLIQQALTQLVNEGVLPEGLTPAIQVENARDKTHGDFASNIAMMLAKPAGMKPRDLAEKIIAALPADENVTKAEIAGPGFINFFQNTQALASRLDAALADAHVGVRKAGPAQRTVVDLSAPNLAKEMHVGHLRSTIIGDGVARVLEFLGDTVIRQNHVGDWGTQFGMLMAYLQENPITSDELSDLENFYRAAKQRFDESPEFADRARGLVVKLQAGDAECLALWTKFKDISLSHCQKIYELLNVKLTMADVMGESAYNDDLINVVNDLKAAGMLVESNGAQCVFLDEFKNAEGEPLPVIIVKADGGYLYATTDLAAVRYRSGKLKADRALYFVDQRQALHFQQVFAVARKAGFVTHPMEMEHMGFGTMNGADGRPFKTRDGGTVKLIDLLTEAQERAYALVKEKNPTLADDELRSIAKVVGIGAVKYADLSKHRTSDYSFNFDQMLNLEGNTAPYLLYAYTRVAGVFRKLEKEYSEVDGQIVLEAPQEHDLAAKLAQFGEVLNNVAEKGTPHTLCTYLYEVAGLFSSFYEKCPILTAETPAQMQSRLRLAALTGRTLKQGLELLGLETLERM.

The 'HIGH' region signature appears at P127–H137.

The protein belongs to the class-I aminoacyl-tRNA synthetase family. As to quaternary structure, monomer.

It is found in the cytoplasm. It carries out the reaction tRNA(Arg) + L-arginine + ATP = L-arginyl-tRNA(Arg) + AMP + diphosphate. The sequence is that of Arginine--tRNA ligase from Pseudomonas fluorescens (strain Pf0-1).